We begin with the raw amino-acid sequence, 68 residues long: ATP synthase F(0) complex subunit 8 (68 aa).

Residues 8–24 (VWPTTITPMLLTLFLIT) traverse the membrane as a helical segment. K54 bears the N6-acetyllysine; alternate mark. Position 54 is an N6-succinyllysine; alternate (K54). K57 carries the post-translational modification N6-acetyllysine.

This sequence belongs to the ATPase protein 8 family. In terms of assembly, component of the ATP synthase complex composed at least of ATP5F1A/subunit alpha, ATP5F1B/subunit beta, ATP5MC1/subunit c (homooctomer), MT-ATP6/subunit a, MT-ATP8/subunit 8, ATP5ME/subunit e, ATP5MF/subunit f, ATP5MG/subunit g, ATP5MK/subunit k, ATP5MJ/subunit j, ATP5F1C/subunit gamma, ATP5F1D/subunit delta, ATP5F1E/subunit epsilon, ATP5PF/subunit F6, ATP5PB/subunit b, ATP5PD/subunit d, ATP5PO/subunit OSCP. ATP synthase complex consists of a soluble F(1) head domain (subunits alpha(3) and beta(3)) - the catalytic core - and a membrane F(0) domain - the membrane proton channel (subunits c, a, 8, e, f, g, k and j). These two domains are linked by a central stalk (subunits gamma, delta, and epsilon) rotating inside the F1 region and a stationary peripheral stalk (subunits F6, b, d, and OSCP). Interacts with PRICKLE3.

It localises to the mitochondrion membrane. Functionally, subunit 8, of the mitochondrial membrane ATP synthase complex (F(1)F(0) ATP synthase or Complex V) that produces ATP from ADP in the presence of a proton gradient across the membrane which is generated by electron transport complexes of the respiratory chain. ATP synthase complex consist of a soluble F(1) head domain - the catalytic core - and a membrane F(1) domain - the membrane proton channel. These two domains are linked by a central stalk rotating inside the F(1) region and a stationary peripheral stalk. During catalysis, ATP synthesis in the catalytic domain of F(1) is coupled via a rotary mechanism of the central stalk subunits to proton translocation. In vivo, can only synthesize ATP although its ATP hydrolase activity can be activated artificially in vitro. Part of the complex F(0) domain. The polypeptide is ATP synthase F(0) complex subunit 8 (Pan paniscus (Pygmy chimpanzee)).